A 20-amino-acid polypeptide reads, in one-letter code: Methyl-coenzyme M reductase subunit gamma (20 aa).

Residues 1–20 are disordered; it reads AYERQFYPGATSVAENNIGH.

Belongs to the methyl-coenzyme M reductase gamma subunit family. In terms of assembly, MCR from M.thermophila is a heterotrimer composed of an alpha, a beta, and a gamma subunit. Coenzyme F430 serves as cofactor.

The protein resides in the cytoplasm. It catalyses the reaction coenzyme B + methyl-coenzyme M = methane + coenzyme M-coenzyme B heterodisulfide. Its pathway is one-carbon metabolism; methyl-coenzyme M reduction; methane from methyl-coenzyme M: step 1/1. In terms of biological role, component of the methyl-coenzyme M reductase (MCR) I that catalyzes the reductive cleavage of methyl-coenzyme M (CoM-S-CH3 or 2-(methylthio)ethanesulfonate) using coenzyme B (CoB or 7-mercaptoheptanoylthreonine phosphate) as reductant which results in the production of methane and the mixed heterodisulfide of CoB and CoM (CoM-S-S-CoB). This is the final step in methanogenesis. This Methanosarcina thermophila protein is Methyl-coenzyme M reductase subunit gamma.